The chain runs to 92 residues: Small ribosomal subunit protein bS20 (92 aa).

A disordered region spans residues 1–25; sequence MANSAQARKRARQAAKANSHNSALR.

The protein belongs to the bacterial ribosomal protein bS20 family.

In terms of biological role, binds directly to 16S ribosomal RNA. In Paraburkholderia phymatum (strain DSM 17167 / CIP 108236 / LMG 21445 / STM815) (Burkholderia phymatum), this protein is Small ribosomal subunit protein bS20.